Here is a 790-residue protein sequence, read N- to C-terminus: GATOR2 complex protein WDR24 (790 aa).

WD repeat units lie at residues 72–112 (SLNL…RNKQ), 118–158 (EHKR…SVST), 161–201 (GQSE…RCER), 205–245 (AHNG…AKEM), 249–291 (QTIA…VPAA), and 295–338 (EHRD…VERA). The residue at position 155 (S155) is a Phosphoserine; by AMPK. S470 and S496 each carry phosphoserine. T581 is subject to Phosphothreonine. Phosphoserine is present on residues S594 and S598. Residues 718–740 (NCSHCKRPMSSRGWVCDRCHRCA) form a C4-type zinc finger. C719, C722, C733, C736, C743, C746, C757, C760, H762, H765, H768, C779, C783, H785, and C787 together coordinate Zn(2+). Residues 741–790 (SMCAVCHHVVKGLFVWCQGCSHGGHLQHIMKWLEGSSHCPAGCGHLCEYS) form an RING-type; atypical zinc finger.

It belongs to the WD repeat WDR24 family. Component of the GATOR2 subcomplex, composed of MIOS, SEC13, SEH1L, WDR24 and WDR59. The GATOR2 complex interacts with CASTOR1 and CASTOR2; the interaction is negatively regulated by arginine. The GATOR2 complex interacts with SESN1, SESN2 and SESN3; the interaction is negatively regulated by amino acids. SESN1, SESN2 and SESN3 convey leucine availability via direct interaction with SEH1L and WDR24. Phosphorylation at Ser-155 by AMPK in response to glucose deprivation inactivates WDR24 by promoting interaction with 14-3-3 proteins, such as YWHAG, preventing assembly of the GATOR2 complex. In terms of processing, autoubiquitinated; MIOS is required to prevent autoubiquitination.

It is found in the lysosome membrane. The catalysed reaction is S-ubiquitinyl-[E2 ubiquitin-conjugating enzyme]-L-cysteine + [acceptor protein]-L-lysine = [E2 ubiquitin-conjugating enzyme]-L-cysteine + N(6)-ubiquitinyl-[acceptor protein]-L-lysine.. It functions in the pathway protein modification; protein ubiquitination. With respect to regulation, the GATOR2 complex is negatively regulated by the upstream amino acid sensors CASTOR1 and SESN2, which sequester the GATOR2 complex in absence of amino acids. In the presence of abundant amino acids, GATOR2 is released from CASTOR1 and SESN2 and activated. In terms of biological role, catalytic component of the GATOR2 complex, a multiprotein complex that acts as an activator of the amino acid-sensing branch of the mTORC1 signaling pathway. The GATOR2 complex indirectly activates mTORC1 through the inhibition of the GATOR1 subcomplex. GATOR2 probably acts as an E3 ubiquitin-protein ligase toward GATOR1. In the presence of abundant amino acids, the GATOR2 complex mediates ubiquitination of the NPRL2 core component of the GATOR1 complex, leading to GATOR1 inactivation. In the absence of amino acids, GATOR2 is inhibited, activating the GATOR1 complex. In addition to its role in regulation of the mTORC1 complex, promotes the acidification of lysosomes and facilitates autophagic flux. Within the GATOR2 complex, WDR24 constitutes the catalytic subunit that mediates 'Lys-6'-linked ubiquitination of NPRL2. This chain is GATOR2 complex protein WDR24, found in Homo sapiens (Human).